The following is a 31-amino-acid chain: MSDIN-like toxin proprotein 4 (31 aa).

Positions 1 to 10 are excised as a propeptide; it reads MSDINGTRLP. The cyclopeptide (Trp-Pro) cross-link spans 11-16; that stretch reads WLATCP. Positions 17–31 are excised as a propeptide; sequence CVGEDVNPTLSRGER.

This sequence belongs to the MSDIN fungal toxin family. Processed by the macrocyclase-peptidase enzyme POPB to yield a toxic cyclic hexapeptide. POPB first removes 10 residues from the N-terminus. Conformational trapping of the remaining peptide forces the enzyme to release this intermediate rather than proceed to macrocyclization. The enzyme rebinds the remaining peptide in a different conformation and catalyzes macrocyclization of the N-terminal 6 residues.

Functionally, probable toxin that belongs to the MSDIN-like toxin family responsible for a large number of food poisoning cases and deaths. This is MSDIN-like toxin proprotein 4 from Amanita phalloides (Death cap).